We begin with the raw amino-acid sequence, 135 residues long: ATP synthase epsilon chain (135 aa).

Belongs to the ATPase epsilon chain family. F-type ATPases have 2 components, CF(1) - the catalytic core - and CF(0) - the membrane proton channel. CF(1) has five subunits: alpha(3), beta(3), gamma(1), delta(1), epsilon(1). CF(0) has three main subunits: a, b and c.

It is found in the cell inner membrane. Its function is as follows. Produces ATP from ADP in the presence of a proton gradient across the membrane. The chain is ATP synthase epsilon chain from Rhizobium etli (strain ATCC 51251 / DSM 11541 / JCM 21823 / NBRC 15573 / CFN 42).